A 103-amino-acid polypeptide reads, in one-letter code: Large ribosomal subunit protein bL21 (103 aa).

Belongs to the bacterial ribosomal protein bL21 family. As to quaternary structure, part of the 50S ribosomal subunit. Contacts protein L20.

Functionally, this protein binds to 23S rRNA in the presence of protein L20. This Delftia acidovorans (strain DSM 14801 / SPH-1) protein is Large ribosomal subunit protein bL21.